The chain runs to 561 residues: Dihydroxy-acid dehydratase (561 aa).

[2Fe-2S] cluster is bound at residue Cys-50. Residue Asp-82 coordinates Mg(2+). Residue Cys-123 coordinates [2Fe-2S] cluster. Residues Asp-124 and Lys-125 each contribute to the Mg(2+) site. The residue at position 125 (Lys-125) is an N6-carboxylysine. Cys-195 is a [2Fe-2S] cluster binding site. A Mg(2+)-binding site is contributed by Glu-447. The active-site Proton acceptor is Ser-473.

It belongs to the IlvD/Edd family. As to quaternary structure, homodimer. [2Fe-2S] cluster serves as cofactor. Requires Mg(2+) as cofactor.

It catalyses the reaction (2R)-2,3-dihydroxy-3-methylbutanoate = 3-methyl-2-oxobutanoate + H2O. The enzyme catalyses (2R,3R)-2,3-dihydroxy-3-methylpentanoate = (S)-3-methyl-2-oxopentanoate + H2O. It functions in the pathway amino-acid biosynthesis; L-isoleucine biosynthesis; L-isoleucine from 2-oxobutanoate: step 3/4. It participates in amino-acid biosynthesis; L-valine biosynthesis; L-valine from pyruvate: step 3/4. In terms of biological role, functions in the biosynthesis of branched-chain amino acids. Catalyzes the dehydration of (2R,3R)-2,3-dihydroxy-3-methylpentanoate (2,3-dihydroxy-3-methylvalerate) into 2-oxo-3-methylpentanoate (2-oxo-3-methylvalerate) and of (2R)-2,3-dihydroxy-3-methylbutanoate (2,3-dihydroxyisovalerate) into 2-oxo-3-methylbutanoate (2-oxoisovalerate), the penultimate precursor to L-isoleucine and L-valine, respectively. This Acaryochloris marina (strain MBIC 11017) protein is Dihydroxy-acid dehydratase.